A 132-amino-acid chain; its full sequence is Mercuric resistance operon regulatory protein (132 aa).

Residues 2–71 enclose the HTH merR-type domain; that stretch reads KFRIGELADK…LNEIDKLLGV (70 aa). A DNA-binding region (H-T-H motif) is located at residues 5 to 24; that stretch reads IGELADKCGVNKETIRYYER. Hg(2+) contacts are provided by Cys79, Cys114, and Cys123.

As to quaternary structure, homodimer.

Mediates the mercuric-dependent induction of mercury resistance operon. In the absence of mercury MerR represses transcription by binding tightly to the mer operator region; when mercury is present the dimeric complex binds a single ion and becomes a potent transcriptional activator, while remaining bound to the mer site. In Bacillus cereus, this protein is Mercuric resistance operon regulatory protein (merR1).